A 393-amino-acid polypeptide reads, in one-letter code: MTPFHRLSRFFRQAPSPPRTPITSNFPILDSAVKIEEERMPAFDRGLFYPVKLGDVFRSRYQVLSKLGFGANSTVWFCRDLHQHRYIALKIYIRSSEVNREVQVLKHLSSVKTNHPGSSLVRKMIEEFEITGPSGSHQCIVYEPLLTSLLHFQATLKPQSLPEDLLKGALQQLLLALDYLHSEAHVIHTDDSIFREWDTSEEAEPSPRKVDSSHTIYKSRPFHRKKGWSGFGMPLLSDFGEARLGDVHDGSIQPDIYRAPEVILGMSWTSKVDIWNVGALIWDLFEDHHLFDGRGPNGDHSDAHLLAEMIAMLGPAPLNFLRKAPQSRKYWDSNGRWKGAIEVPQCSLEDSEEYLEGENKKMFMQFVRKMLRWDPEERQSAPELLTDPWLIAQ.

The 330-residue stretch at 61–390 (YQVLSKLGFG…APELLTDPWL (330 aa)) folds into the Protein kinase domain. Residues 67–75 (LGFGANSTV) and Lys-90 contribute to the ATP site. The Proton acceptor role is filled by Asp-190.

Belongs to the protein kinase superfamily. CMGC Ser/Thr protein kinase family.

It carries out the reaction L-seryl-[protein] + ATP = O-phospho-L-seryl-[protein] + ADP + H(+). It catalyses the reaction L-threonyl-[protein] + ATP = O-phospho-L-threonyl-[protein] + ADP + H(+). Its function is as follows. Serine/threonine protein kinase; part of the subtelomeric hrmA-associated cluster (HAC) containing genes that alter the hyphal surface (such as reduced total chitin or increased beta-glucan exposure) and perturb inter-hyphal interactions within the developing biofilms, resulting in a loss of vertically aligned polarized growing filaments. Consequently, this hypoxia-typic morphotype (called H-MORPH) with altered biofilm architecture leads to increased hypoxia fitness, increased host inflammation, rapid disease progression, and mortality in a murine model of invasive aspergillosis. This is Serine/threonine protein kinase AFUB_078980 from Aspergillus fumigatus (strain CBS 144.89 / FGSC A1163 / CEA10) (Neosartorya fumigata).